Here is a 712-residue protein sequence, read N- to C-terminus: Follistatin-like domain-containing protein DDB_G0289517 (712 aa).

The N-terminal stretch at 1 to 21 (MKIQTIIQIVLISFLFLNVES) is a signal peptide. Asn-102 is a glycosylation site (N-linked (GlcNAc...) asparagine). Residues 181–400 (DIYNHLNPDS…SSSPVHQDPC (220 aa)) are disordered. Residues 192-203 (QFKDKPNHENHK) show a composition bias toward basic and acidic residues. Positions 204-214 (KDKNNKKHKKD) are enriched in basic residues. 2 N-linked (GlcNAc...) asparagine glycosylation sites follow: Asn-217 and Asn-234. The span at 220–251 (DKNNNNNNNNNNKKNKTINNNEPNQNQQSNPI) shows a compositional bias: low complexity. The span at 254–269 (TFNNETPFPWNFKNQD) shows a compositional bias: polar residues. Over residues 270–281 (QQQQKQEQTQKQ) the composition is skewed to low complexity. Polar residues predominate over residues 301-321 (KEPTTHLNTIEPTSFTASASR). A compositionally biased stretch (acidic residues) spans 330 to 339 (KDEENIDENN). The span at 352–364 (DDKSKKPKDDEKH) shows a compositional bias: basic and acidic residues. N-linked (GlcNAc...) asparagine glycosylation is present at Asn-369. The segment covering 374–384 (PADDPSIEITE) has biased composition (acidic residues). The segment covering 386 to 395 (PTITPSSSPV) has biased composition (polar residues). 2 Follistatin-like domains span residues 399-421 (PCKKATCPNGSHCLVYGNQAYCK) and 471-494 (TCSTIKCEDDEVCINKVGLNPYCQ). Residue Asn-407 is glycosylated (N-linked (GlcNAc...) asparagine). 3 N-linked (GlcNAc...) asparagine glycosylation sites follow: Asn-505, Asn-524, and Asn-566. One can recognise a Follistatin-like 3 domain in the interval 596–618 (SCETLLCEGVNSYCVENGGPICK). N-linked (GlcNAc...) asparagine glycosylation occurs at Asn-622. Follistatin-like domains are found at residues 660 to 682 (SCSVIQCPDNQYCVNTDKGPKCY) and 687 to 710 (ECSNSRCPRDYTCKRDEIRGGACL).

It is found in the secreted. The protein is Follistatin-like domain-containing protein DDB_G0289517 of Dictyostelium discoideum (Social amoeba).